We begin with the raw amino-acid sequence, 443 residues long: ATP-dependent protease ATPase subunit HslU (443 aa).

Residues Ile-18, 60-65 (GVGKTE), Asp-256, Glu-321, and Arg-393 contribute to the ATP site.

It belongs to the ClpX chaperone family. HslU subfamily. A double ring-shaped homohexamer of HslV is capped on each side by a ring-shaped HslU homohexamer. The assembly of the HslU/HslV complex is dependent on binding of ATP.

Its subcellular location is the cytoplasm. Its function is as follows. ATPase subunit of a proteasome-like degradation complex; this subunit has chaperone activity. The binding of ATP and its subsequent hydrolysis by HslU are essential for unfolding of protein substrates subsequently hydrolyzed by HslV. HslU recognizes the N-terminal part of its protein substrates and unfolds these before they are guided to HslV for hydrolysis. The chain is ATP-dependent protease ATPase subunit HslU from Escherichia coli O17:K52:H18 (strain UMN026 / ExPEC).